Here is a 291-residue protein sequence, read N- to C-terminus: tRNA pseudouridine synthase-like 1 (291 aa).

Aspartate 66 functions as the Nucleophile in the catalytic mechanism. Substrate is bound at residue tyrosine 130.

This sequence belongs to the tRNA pseudouridine synthase TruA family.

The enzyme catalyses a uridine in tRNA = a pseudouridine in tRNA. In Mus musculus (Mouse), this protein is tRNA pseudouridine synthase-like 1 (Pusl1).